Here is a 394-residue protein sequence, read N- to C-terminus: G2/mitotic-specific cyclin-B2 (394 aa).

This sequence belongs to the cyclin family. Cyclin AB subfamily. In terms of assembly, interacts with the CDK1 protein kinase to form a serine/threonine kinase holoenzyme complex also known as maturation promoting factor (MPF). The cyclin subunit imparts substrate specificity to the complex.

Essential for the control of the cell cycle at the G2/M (mitosis) transition. The chain is G2/mitotic-specific cyclin-B2 (ccnb2) from Anguilla japonica (Japanese eel).